Consider the following 172-residue polypeptide: Adenylate kinase isoenzyme 6 (172 aa).

Residues G13, G15, K16, T17, and T18 each contribute to the ATP site. The segment at 33–56 is NMPbind; the sequence is NVGDLAREGELYDGFDEEYNCPIL. The segment at 108-118 is LID; sequence TRGYSEKKLND. The ATP site is built by R109 and K148.

This sequence belongs to the adenylate kinase family. AK6 subfamily. Monomer and homodimer. Interacts with small ribosomal subunit protein uS11. Not a structural component of 43S pre-ribosomes, but transiently interacts with them by binding to uS11. Interacts with COIL (via C-terminus).

It is found in the cytoplasm. The protein localises to the nucleus. Its subcellular location is the nucleoplasm. The protein resides in the cajal body. It carries out the reaction AMP + ATP = 2 ADP. It catalyses the reaction ATP + H2O = ADP + phosphate + H(+). Functionally, broad-specificity nucleoside monophosphate (NMP) kinase that catalyzes the reversible transfer of the terminal phosphate group between nucleoside triphosphates and monophosphates. Also has ATPase activity. Involved in the late cytoplasmic maturation steps of the 40S ribosomal particles, specifically 18S rRNA maturation. While NMP activity is not required for ribosome maturation, ATPase activity is. Associates transiently with small ribosomal subunit protein uS11. ATP hydrolysis breaks the interaction with uS11. May temporarily remove uS11 from the ribosome to enable a conformational change of the ribosomal RNA that is needed for the final maturation step of the small ribosomal subunit. Its NMP activity may have a role in nuclear energy homeostasis. May be involved in regulation of Cajal body (CB) formation. The sequence is that of Adenylate kinase isoenzyme 6 from Oryctolagus cuniculus (Rabbit).